We begin with the raw amino-acid sequence, 302 residues long: Sulfate adenylyltransferase subunit 2 (302 aa).

It belongs to the PAPS reductase family. CysD subfamily. Heterodimer composed of CysD, the smaller subunit, and CysN.

The enzyme catalyses sulfate + ATP + H(+) = adenosine 5'-phosphosulfate + diphosphate. Its pathway is sulfur metabolism; hydrogen sulfide biosynthesis; sulfite from sulfate: step 1/3. With CysN forms the ATP sulfurylase (ATPS) that catalyzes the adenylation of sulfate producing adenosine 5'-phosphosulfate (APS) and diphosphate, the first enzymatic step in sulfur assimilation pathway. APS synthesis involves the formation of a high-energy phosphoric-sulfuric acid anhydride bond driven by GTP hydrolysis by CysN coupled to ATP hydrolysis by CysD. The protein is Sulfate adenylyltransferase subunit 2 of Salmonella paratyphi A (strain AKU_12601).